We begin with the raw amino-acid sequence, 216 residues long: uncharacterized protein (216 aa).

Residues Met1–Phe21 traverse the membrane as a helical segment.

The protein localises to the membrane. This is an uncharacterized protein from Saccharomyces cerevisiae (strain ATCC 204508 / S288c) (Baker's yeast).